The sequence spans 137 residues: MSIVKEFREFAMRGNVVDLAVGVIIGAAFGKIVSSLVADIIMPPLGLLIGGIDFKQFAVTLRDAQGDIPAVVMHYGVFIQNVFDFVIVAFAIFMAIKLINRLNRKKEEPAAVPPAPSKEEVLLTQIRDLLKEQNNRI.

2 helical membrane passes run 10–30 (FAMRGNVVDLAVGVIIGAAFG) and 76–96 (GVFIQNVFDFVIVAFAIFMAI).

Belongs to the MscL family. As to quaternary structure, homopentamer.

It is found in the cell inner membrane. Channel that opens in response to stretch forces in the membrane lipid bilayer. May participate in the regulation of osmotic pressure changes within the cell. The polypeptide is Large-conductance mechanosensitive channel (Enterobacter sp. (strain 638)).